Consider the following 514-residue polypeptide: Importin subunit alpha-3 (514 aa).

Residues 1–51 enclose the IBB domain; that stretch reads MSSNRQAYYKNNAKEQIGKEKRNEEVVSIRKDKREEAISKRRNINTQIEDD. A disordered region spans residues 1 to 62; that stretch reads MSSNRQAYYK…ETSTTPPGPF (62 aa). Over residues 12 to 39 the composition is skewed to basic and acidic residues; that stretch reads NAKEQIGKEKRNEEVVSIRKDKREEAIS. 8 ARM repeats span residues 101–142, 143–187, 188–226, 227–271, 272–311, 312–353, 354–393, and 394–436; these read IDDL…TSEQ, TQAV…FRDY, CLEL…CKDP, APSP…EHIQ, MVIE…TDEQ, TQLV…NQQQ, VQDV…ISGR, and PNQV…KMAG. The disordered stretch occupies residues 485-514; the sequence is GNVEGAQSSAFGGDVPPVPDAPNGGWNFGK.

It belongs to the importin alpha family. Forms a complex with an importin beta subunit. May interact with transcription factor cebp-1 (via N-terminus). Interacts with cmk-1; affinity for cmk-1 is increased in the presence of Ca(2+) and calmodulin and leads to increased nuclear accumulation of cmk-1 in FLP neurons upon prolonged heat activation. In terms of tissue distribution, expressed in larval and adult germline and somatic tissues, including neurons.

Its subcellular location is the cytoplasm. The protein localises to the nucleus. Its function is as follows. Binds specifically and directly to substrates containing either a simple or bipartite NLS motif. Promotes docking of import substrates to the nuclear envelope. Seems to act as a cytosolic receptor for both simple and bipartite NLS motifs. Necessary for correct nucleoporin localization within the germline. Essential gene for embryonic and larval development. May be dispensable for axon development, but required for axon regeneration in both mechanosensory and motor neurons. Required for oogenic development, ima-1 and ima-2 cannot functionally compensate for loss of ima-3. This is Importin subunit alpha-3 (ima-3) from Caenorhabditis elegans.